Consider the following 90-residue polypeptide: Exodeoxyribonuclease 7 small subunit (90 aa).

Residues 62–90 (QDGQANPMSSQGHTAGEYPDDEAEEAEEA) are disordered. Residues 64 to 74 (GQANPMSSQGH) show a composition bias toward polar residues. Residues 79–90 (YPDDEAEEAEEA) are compositionally biased toward acidic residues.

The protein belongs to the XseB family. As to quaternary structure, heterooligomer composed of large and small subunits.

The protein localises to the cytoplasm. It carries out the reaction Exonucleolytic cleavage in either 5'- to 3'- or 3'- to 5'-direction to yield nucleoside 5'-phosphates.. In terms of biological role, bidirectionally degrades single-stranded DNA into large acid-insoluble oligonucleotides, which are then degraded further into small acid-soluble oligonucleotides. The protein is Exodeoxyribonuclease 7 small subunit of Desulfovibrio desulfuricans (strain ATCC 27774 / DSM 6949 / MB).